The sequence spans 662 residues: Calcium-dependent protease (662 aa).

The 334-residue stretch at 196 to 529 (QWHLKETTIG…YGRINALKAV (334 aa)) folds into the Peptidase S8 domain. Active-site charge relay system residues include D233, H270, and S466. In terms of domain architecture, P/Homo B spans 535–662 (AQPEPVSIFT…IRSLTIELGF (128 aa)).

The protein belongs to the peptidase S8 family.

The protein localises to the cytoplasm. Its function is as follows. Degrades phycobiliproteins in vitro. Has a substrate specificity similar to that of trypsin. In Nostoc sp. (strain PCC 7120 / SAG 25.82 / UTEX 2576), this protein is Calcium-dependent protease (prcA).